The following is a 352-amino-acid chain: Minor capsid protein P14 (352 aa).

Residues Tyr122 to Pro214 are disordered. The segment covering Pro129 to Pro145 has biased composition (basic residues). Positions Lys146–Ile204 are enriched in pro residues. The tract at residues Trp244–Ile264 is hydrophobic.

As to quaternary structure, interacts with the major capsid protein.

The protein resides in the virion. Functionally, one of the minor capsid proteins that constitute a network internal to the major capsid proteins and outside the lipid membrane. The minor capsid protein P14 does not serve a cross-linking function between neighboring capsomers, it may play a role in the viral capsid assembly. The polypeptide is Minor capsid protein P14 (Chlorella (PBCV-1)).